The chain runs to 508 residues: Photosystem II CP47 reaction center protein (508 aa).

6 helical membrane-spanning segments follow: residues 21–36, 101–115, 140–156, 203–218, 237–252, and 457–472; these read SVHL…WAGS, IVLS…IWHW, GIHL…FGAF, IAAG…FHLS, VLSS…AFVV, and TFAL…HGAR.

It belongs to the PsbB/PsbC family. PsbB subfamily. PSII is composed of 1 copy each of membrane proteins PsbA, PsbB, PsbC, PsbD, PsbE, PsbF, PsbH, PsbI, PsbJ, PsbK, PsbL, PsbM, PsbT, PsbX, PsbY, PsbZ, Psb30/Ycf12, at least 3 peripheral proteins of the oxygen-evolving complex and a large number of cofactors. It forms dimeric complexes. Requires Binds multiple chlorophylls. PSII binds additional chlorophylls, carotenoids and specific lipids. as cofactor.

It localises to the plastid. Its subcellular location is the chloroplast thylakoid membrane. One of the components of the core complex of photosystem II (PSII). It binds chlorophyll and helps catalyze the primary light-induced photochemical processes of PSII. PSII is a light-driven water:plastoquinone oxidoreductase, using light energy to abstract electrons from H(2)O, generating O(2) and a proton gradient subsequently used for ATP formation. This chain is Photosystem II CP47 reaction center protein, found in Angiopteris evecta (Mule's foot fern).